Consider the following 834-residue polypeptide: Protein translocase subunit SecA (834 aa).

ATP contacts are provided by residues glutamine 85, 103-107 (GEGKT), and aspartate 491. The disordered stretch occupies residues 790–809 (RETSTNINDGEGGSHEPIKR). The Zn(2+) site is built by cysteine 820, cysteine 822, cysteine 831, and cysteine 832.

It belongs to the SecA family. As to quaternary structure, monomer and homodimer. Part of the essential Sec protein translocation apparatus which comprises SecA, SecYEG and auxiliary proteins SecDF. Other proteins may also be involved. Requires Zn(2+) as cofactor.

It is found in the cell membrane. Its subcellular location is the cytoplasm. The catalysed reaction is ATP + H2O + cellular proteinSide 1 = ADP + phosphate + cellular proteinSide 2.. Functionally, part of the Sec protein translocase complex. Interacts with the SecYEG preprotein conducting channel. Has a central role in coupling the hydrolysis of ATP to the transfer of proteins into and across the cell membrane, serving as an ATP-driven molecular motor driving the stepwise translocation of polypeptide chains across the membrane. In Clostridium novyi (strain NT), this protein is Protein translocase subunit SecA.